We begin with the raw amino-acid sequence, 286 residues long: Nucleotide-binding protein HS_1178 (286 aa).

8–15 (GRSGAGKS) contacts ATP. A GTP-binding site is contributed by 56-59 (DIRN).

This sequence belongs to the RapZ-like family.

Functionally, displays ATPase and GTPase activities. This Histophilus somni (strain 129Pt) (Haemophilus somnus) protein is Nucleotide-binding protein HS_1178.